Consider the following 100-residue polypeptide: Large ribosomal subunit protein bL28 (100 aa).

The protein belongs to the bacterial ribosomal protein bL28 family.

This Methylobacterium radiotolerans (strain ATCC 27329 / DSM 1819 / JCM 2831 / NBRC 15690 / NCIMB 10815 / 0-1) protein is Large ribosomal subunit protein bL28.